The primary structure comprises 391 residues: Putative glutamate--cysteine ligase 2-2 (391 aa).

Belongs to the glutamate--cysteine ligase type 2 family. YbdK subfamily.

It carries out the reaction L-cysteine + L-glutamate + ATP = gamma-L-glutamyl-L-cysteine + ADP + phosphate + H(+). In terms of biological role, ATP-dependent carboxylate-amine ligase which exhibits weak glutamate--cysteine ligase activity. The polypeptide is Putative glutamate--cysteine ligase 2-2 (Saccharopolyspora erythraea (strain ATCC 11635 / DSM 40517 / JCM 4748 / NBRC 13426 / NCIMB 8594 / NRRL 2338)).